We begin with the raw amino-acid sequence, 516 residues long: Adenine DNA glycosylase (516 aa).

Over residues 1–23 the composition is skewed to basic residues; that stretch reads MKKLRASVRSHKKQPANHKRRGK. The disordered stretch occupies residues 1–38; that stretch reads MKKLRASVRSHKKQPANHKRRGKCALSSSQAKPSGLDG. Catalysis depends on glutamate 105, which acts as the Proton donor/acceptor. 4 residues coordinate [4Fe-4S] cluster: cysteine 261, cysteine 268, cysteine 271, and cysteine 277. A Nudix hydrolase domain is found at 335-467; that stretch reads PREEYSATCV…AMKKVFRVYE (133 aa). The short motif at 376–398 is the Nudix box element; it reads VTLEPSGQHQHKALLQELQHWSA. Residues 474-516 are disordered; sequence CKGSKRPQVCTPSSRKKPSRGQQVLDRFFQRHIPTHKPNSTTQ.

Belongs to the Nth/MutY family. It depends on [4Fe-4S] cluster as a cofactor. Expressed in brain, spleen, heart, liver and kidney.

Its subcellular location is the nucleus. The protein resides in the mitochondrion. It carries out the reaction Hydrolyzes free adenine bases from 7,8-dihydro-8-oxoguanine:adenine mismatched double-stranded DNA, leaving an apurinic site.. Involved in oxidative DNA damage repair. Initiates repair of A*oxoG to C*G by removing the inappropriately paired adenine base from the DNA backbone. Possesses both adenine and 2-OH-A DNA glycosylase activities. The sequence is that of Adenine DNA glycosylase (Mutyh) from Rattus norvegicus (Rat).